Consider the following 334-residue polypeptide: tRNA uridine(34) hydroxylase (334 aa).

Positions 123-217 constitute a Rhodanese domain; the sequence is SDPDVILVDT…YLEEVKAEES (95 aa). Catalysis depends on Cys-177, which acts as the Cysteine persulfide intermediate.

Belongs to the TrhO family.

It catalyses the reaction uridine(34) in tRNA + AH2 + O2 = 5-hydroxyuridine(34) in tRNA + A + H2O. Its function is as follows. Catalyzes oxygen-dependent 5-hydroxyuridine (ho5U) modification at position 34 in tRNAs. This chain is tRNA uridine(34) hydroxylase, found in Shewanella baltica (strain OS223).